Consider the following 365-residue polypeptide: 3,4-dihydroxy-2-butanone 4-phosphate synthase (365 aa).

A DHBP synthase region spans residues 1-201 (MALNTIDELI…IADLIHYRLI (201 aa)). D-ribulose 5-phosphate contacts are provided by residues 27 to 28 (RE), D32, 140 to 144 (RAGHT), and E164. E28 contributes to the Mg(2+) binding site. H143 is a Mg(2+) binding site. Positions 202 to 365 (HERTVERIAE…LEVVEYLPAE (164 aa)) are GTP cyclohydrolase II-like.

This sequence in the N-terminal section; belongs to the DHBP synthase family. In the C-terminal section; belongs to the GTP cyclohydrolase II family. It depends on Mg(2+) as a cofactor. The cofactor is Mn(2+).

The enzyme catalyses D-ribulose 5-phosphate = (2S)-2-hydroxy-3-oxobutyl phosphate + formate + H(+). The protein operates within cofactor biosynthesis; riboflavin biosynthesis; 2-hydroxy-3-oxobutyl phosphate from D-ribulose 5-phosphate: step 1/1. Functionally, catalyzes the conversion of D-ribulose 5-phosphate to formate and 3,4-dihydroxy-2-butanone 4-phosphate. The polypeptide is 3,4-dihydroxy-2-butanone 4-phosphate synthase (ribB) (Pseudomonas aeruginosa (strain ATCC 15692 / DSM 22644 / CIP 104116 / JCM 14847 / LMG 12228 / 1C / PRS 101 / PAO1)).